Here is an 88-residue protein sequence, read N- to C-terminus: Small ribosomal subunit protein uS15 (88 aa).

The tract at residues 1 to 23 is disordered; sequence MIASSVKAEVVKSNARSANDTGS. A compositionally biased stretch (polar residues) spans 14–23; sequence NARSANDTGS.

This sequence belongs to the universal ribosomal protein uS15 family. As to quaternary structure, part of the 30S ribosomal subunit. Forms a bridge to the 50S subunit in the 70S ribosome, contacting the 23S rRNA.

Its function is as follows. One of the primary rRNA binding proteins, it binds directly to 16S rRNA where it helps nucleate assembly of the platform of the 30S subunit by binding and bridging several RNA helices of the 16S rRNA. In terms of biological role, forms an intersubunit bridge (bridge B4) with the 23S rRNA of the 50S subunit in the ribosome. This is Small ribosomal subunit protein uS15 from Delftia acidovorans (strain DSM 14801 / SPH-1).